Here is a 304-residue protein sequence, read N- to C-terminus: Acetylglutamate kinase (304 aa).

Substrate-binding positions include G71–G72, R93, and N193.

It belongs to the acetylglutamate kinase family. ArgB subfamily.

The protein resides in the cytoplasm. The catalysed reaction is N-acetyl-L-glutamate + ATP = N-acetyl-L-glutamyl 5-phosphate + ADP. It participates in amino-acid biosynthesis; L-arginine biosynthesis; N(2)-acetyl-L-ornithine from L-glutamate: step 2/4. In terms of biological role, catalyzes the ATP-dependent phosphorylation of N-acetyl-L-glutamate. This Streptomyces avermitilis (strain ATCC 31267 / DSM 46492 / JCM 5070 / NBRC 14893 / NCIMB 12804 / NRRL 8165 / MA-4680) protein is Acetylglutamate kinase.